We begin with the raw amino-acid sequence, 170 residues long: Protein-export protein SecB (170 aa).

Belongs to the SecB family. As to quaternary structure, homotetramer, a dimer of dimers. One homotetramer interacts with 1 SecA dimer.

The protein resides in the cytoplasm. One of the proteins required for the normal export of preproteins out of the cell cytoplasm. It is a molecular chaperone that binds to a subset of precursor proteins, maintaining them in a translocation-competent state. It also specifically binds to its receptor SecA. This chain is Protein-export protein SecB, found in Xanthomonas axonopodis pv. citri (strain 306).